Here is a 767-residue protein sequence, read N- to C-terminus: Probable beta-D-xylosidase 7 (767 aa).

The first 19 residues, 1 to 19 (MAKQLLLLLLLFIVHGVES), serve as a signal peptide directing secretion. N-linked (GlcNAc...) asparagine glycosylation is present at Asn-100. Residue Asp-292 is part of the active site. A glycan (N-linked (GlcNAc...) asparagine) is linked at Asn-643.

The protein belongs to the glycosyl hydrolase 3 family.

Its subcellular location is the secreted. The protein resides in the extracellular space. The protein localises to the extracellular matrix. This Arabidopsis thaliana (Mouse-ear cress) protein is Probable beta-D-xylosidase 7 (BXL7).